Here is a 262-residue protein sequence, read N- to C-terminus: Acyl-[acyl-carrier-protein]--UDP-N-acetylglucosamine O-acyltransferase (262 aa).

This sequence belongs to the transferase hexapeptide repeat family. LpxA subfamily. As to quaternary structure, homotrimer.

The protein resides in the cytoplasm. It carries out the reaction a (3R)-hydroxyacyl-[ACP] + UDP-N-acetyl-alpha-D-glucosamine = a UDP-3-O-[(3R)-3-hydroxyacyl]-N-acetyl-alpha-D-glucosamine + holo-[ACP]. Its pathway is glycolipid biosynthesis; lipid IV(A) biosynthesis; lipid IV(A) from (3R)-3-hydroxytetradecanoyl-[acyl-carrier-protein] and UDP-N-acetyl-alpha-D-glucosamine: step 1/6. Its function is as follows. Involved in the biosynthesis of lipid A, a phosphorylated glycolipid that anchors the lipopolysaccharide to the outer membrane of the cell. In Klebsiella pneumoniae (strain 342), this protein is Acyl-[acyl-carrier-protein]--UDP-N-acetylglucosamine O-acyltransferase.